Reading from the N-terminus, the 133-residue chain is Arsenate reductase 1 (133 aa).

Residues Cys-10, Cys-82, and Cys-89 each act as nucleophile in the active site. Disulfide bonds link Cys-10–Cys-82 and Cys-82–Cys-89.

This sequence belongs to the low molecular weight phosphotyrosine protein phosphatase family. Thioredoxin-coupled ArsC subfamily.

The protein localises to the cytoplasm. The catalysed reaction is arsenate + [thioredoxin]-dithiol + H(+) = arsenite + [thioredoxin]-disulfide + H2O. Functionally, catalyzes the reduction of arsenate [As(V)] to arsenite [As(III)]. The sequence is that of Arsenate reductase 1 from Staphylococcus haemolyticus (strain JCSC1435).